A 133-amino-acid polypeptide reads, in one-letter code: Small ribosomal subunit protein uS8 (133 aa).

It belongs to the universal ribosomal protein uS8 family. Part of the 30S ribosomal subunit.

One of the primary rRNA binding proteins, it binds directly to 16S rRNA central domain where it helps coordinate assembly of the platform of the 30S subunit. This Hyperthermus butylicus (strain DSM 5456 / JCM 9403 / PLM1-5) protein is Small ribosomal subunit protein uS8.